The sequence spans 191 residues: Putative resolvase L103 (191 aa).

Residues 11-30 (LEVLKVHYQTLYRMEEKGLI) constitute a DNA-binding region (H-T-H motif). A Resolvase/invertase-type recombinase catalytic domain is found at 59–191 (KGICYCRVSS…KKSGKLKAKK (133 aa)). Positions 65-91 (RVSSKKQIKDLNRQVEYMEKNYPEYEI) form a coiled coil. Residue Ser-67 is the O-(5'-phospho-DNA)-serine intermediate of the active site.

It belongs to the site-specific recombinase resolvase family.

Its function is as follows. Resolvase catalyzes the resolution (a site-specific recombination) of the cointegrated replicon to yield the final transposition products. This Acanthamoeba polyphaga (Amoeba) protein is Putative resolvase L103.